The sequence spans 685 residues: UvrABC system protein C (685 aa).

The GIY-YIG domain occupies 15–93 (ALPGVYRYFD…IKTQNPRFNI (79 aa)). The 36-residue stretch at 214-249 (QELLQAMEARMMAYSGQLAFEQAAEVRNQMQALSRV) folds into the UVR domain. Residues 365 to 388 (AQGGDHAPAAQGGDPPPAASSGGH) show a composition bias toward low complexity. The tract at residues 365 to 391 (AQGGDHAPAAQGGDPPPAASSGGHPLR) is disordered.

It belongs to the UvrC family. As to quaternary structure, interacts with UvrB in an incision complex.

The protein localises to the cytoplasm. In terms of biological role, the UvrABC repair system catalyzes the recognition and processing of DNA lesions. UvrC both incises the 5' and 3' sides of the lesion. The N-terminal half is responsible for the 3' incision and the C-terminal half is responsible for the 5' incision. This chain is UvrABC system protein C, found in Verminephrobacter eiseniae (strain EF01-2).